An 808-amino-acid polypeptide reads, in one-letter code: DNA replication licensing factor MCM3 (808 aa).

Alanine 2 is subject to N-acetylalanine. Serine 160 and serine 275 each carry phosphoserine. Lysine 293 is subject to N6-acetyllysine. The MCM domain maps to 295-502; that stretch reads IFDQLARSLA…QDREISDHVL (208 aa). Residues glutamine 353, leucine 393, glutamate 394, alanine 395, and alanine 397 each coordinate ADP. The Arginine finger signature appears at 477-480; it reads SRFD. Alanine 523 contacts ATP. Serine 535 bears the Phosphoserine; by ATM mark. At lysine 547 the chain carries N6-acetyllysine. At serine 611 the chain carries Phosphoserine. The interval 662-739 is disordered; sequence KKRKKRSEDE…ETKESQKVEL (78 aa). Arginine 664 is an ATP binding site. Phosphoserine is present on residues serine 668, serine 672, and serine 681. Over residues 679–688 the composition is skewed to basic and acidic residues; it reads EKSQEDQEQK. Tyrosine 708 bears the Phosphotyrosine mark. Phosphothreonine is present on residues threonine 713 and threonine 722. The span at 727–739 shows a compositional bias: basic and acidic residues; sequence DSQETKESQKVEL. Serine 728 and serine 734 each carry phosphoserine.

The protein belongs to the MCM family. Component of the MCM2-7 complex. The complex forms a toroidal hexameric ring with the proposed subunit order MCM2-MCM6-MCM4-MCM7-MCM3-MCM5. Component of the CMG helicase complex, a hexameric ring of related MCM2-7 subunits stabilized by CDC45 and the tetrameric GINS complex. Associated with the replication-specific DNA polymerase alpha. Interacts with MCMBP. Interacts with ANKRD17. Interacts with MCM3AP isoform MCM3AP; this interaction leads to MCM3 acetylation. Post-translationally, acetylated by MCM3AP. O-glycosylated (O-GlcNAcylated), in a cell cycle-dependent manner.

It is found in the nucleus. Its subcellular location is the chromosome. It carries out the reaction ATP + H2O = ADP + phosphate + H(+). In terms of biological role, acts as a component of the MCM2-7 complex (MCM complex) which is the replicative helicase essential for 'once per cell cycle' DNA replication initiation and elongation in eukaryotic cells. Core component of CDC45-MCM-GINS (CMG) helicase, the molecular machine that unwinds template DNA during replication, and around which the replisome is built. The active ATPase sites in the MCM2-7 ring are formed through the interaction surfaces of two neighboring subunits such that a critical structure of a conserved arginine finger motif is provided in trans relative to the ATP-binding site of the Walker A box of the adjacent subunit. The six ATPase active sites, however, are likely to contribute differentially to the complex helicase activity. Required for the entry in S phase and for cell division. The sequence is that of DNA replication licensing factor MCM3 (MCM3) from Bos taurus (Bovine).